Consider the following 264-residue polypeptide: Putative hydro-lyase Bpet2233 (264 aa).

It belongs to the D-glutamate cyclase family.

The sequence is that of Putative hydro-lyase Bpet2233 from Bordetella petrii (strain ATCC BAA-461 / DSM 12804 / CCUG 43448).